The sequence spans 131 residues: Profilin (131 aa).

Belongs to the profilin family. Occurs in many kinds of cells as a complex with monomeric actin in a 1:1 ratio.

It is found in the cytoplasm. It localises to the cytoskeleton. In terms of biological role, binds to actin and affects the structure of the cytoskeleton. At high concentrations, profilin prevents the polymerization of actin, whereas it enhances it at low concentrations. By binding to PIP2, it inhibits the formation of IP3 and DG. The protein is Profilin (PRO1) of Cynodon dactylon (Bermuda grass).